We begin with the raw amino-acid sequence, 192 residues long: Ion-translocating oxidoreductase complex subunit A (192 aa).

A run of 6 helical transmembrane segments spans residues L5 to L25, I39 to V59, L65 to V85, A102 to L122, A134 to M154, and A171 to V191.

The protein belongs to the NqrDE/RnfAE family. As to quaternary structure, the complex is composed of six subunits: RnfA, RnfB, RnfC, RnfD, RnfE and RnfG.

It localises to the cell inner membrane. Functionally, part of a membrane-bound complex that couples electron transfer with translocation of ions across the membrane. The polypeptide is Ion-translocating oxidoreductase complex subunit A (Shewanella sp. (strain ANA-3)).